The following is a 181-amino-acid chain: Isopentenyl-diphosphate Delta-isomerase (181 aa).

Mn(2+) contacts are provided by His24 and His30. Residues 28–168 (LLHLAFSVLL…PDTFSVWFPT (141 aa)) enclose the Nudix hydrolase domain. The active site involves Cys68. His70 contacts Mn(2+). Glu88 contacts Mg(2+). Residues Glu117 and Glu119 each contribute to the Mn(2+) site. Residue Glu119 is part of the active site.

The protein belongs to the IPP isomerase type 1 family. It depends on Mg(2+) as a cofactor. The cofactor is Mn(2+).

The protein resides in the cytoplasm. The enzyme catalyses isopentenyl diphosphate = dimethylallyl diphosphate. Its pathway is isoprenoid biosynthesis; dimethylallyl diphosphate biosynthesis; dimethylallyl diphosphate from isopentenyl diphosphate: step 1/1. Functionally, catalyzes the 1,3-allylic rearrangement of the homoallylic substrate isopentenyl (IPP) to its highly electrophilic allylic isomer, dimethylallyl diphosphate (DMAPP). This chain is Isopentenyl-diphosphate Delta-isomerase, found in Aliivibrio fischeri (strain MJ11) (Vibrio fischeri).